The primary structure comprises 440 residues: Peroxisome proliferator-activated receptor delta (440 aa).

Residues 1-53 (MEQPQEETPEAREEEKEEVAMGDGAPELNGGPEHTLPSSSCADLSQNSSPSSL) form a disordered region. Over residues 36–53 (LPSSSCADLSQNSSPSSL) the composition is skewed to polar residues. Positions 70–144 (NMECRVCGDK…LGMSHNAIRF (75 aa)) form a DNA-binding region, nuclear receptor. NR C4-type zinc fingers lie at residues 73–93 (CRVC…CEGC) and 110–132 (CDRI…FQKC). One can recognise an NR LBD domain in the interval 210-438 (FVIHDIETLW…HPLLQEIYKD (229 aa)).

This sequence belongs to the nuclear hormone receptor family. NR1 subfamily. In terms of assembly, heterodimer with the retinoid X receptor. Interacts (via domain NR LBD) with CRY1 and CRY2 in a ligand-dependent manner. 'Lys-48'-linked polyubiquitinated; leading to proteasomal degradation. Deubiquitinated and stabilized by OTUD3. In terms of tissue distribution, heart, adrenal and intestine.

It localises to the nucleus. Functionally, ligand-activated transcription factor key mediator of energy metabolism in adipose tissues. Receptor that binds peroxisome proliferators such as hypolipidemic drugs and fatty acids. Has a preference for poly-unsaturated fatty acids, such as gamma-linoleic acid and eicosapentanoic acid. Once activated by a ligand, the receptor binds to promoter elements of target genes. Regulates the peroxisomal beta-oxidation pathway of fatty acids. Functions as transcription activator for the acyl-CoA oxidase gene. Decreases expression of NPC1L1 once activated by a ligand. This is Peroxisome proliferator-activated receptor delta (Ppard) from Mus musculus (Mouse).